The chain runs to 575 residues: MLSTNKNRLIEMLSAALTGLAQERGLEAPPTPRLERPKAVDHGDVACNIALQLSKAWKLNPRELAQALVERLQQQTGFNELIASCEIAGPGFSNFRLSNAAKTAVVQEILSGGTSFGESAPADGSATSAMIEFVSANPTGPLHVGHGRQAALGDALANLLATQGIKVHREFYYNDAGVQIANLALSVQARLQGLKPGDAKWPEQAYNGEYIAEIATTFKASPEFKDDIEAIRQFAVAYLRNEQDIDLKTFGVKFDCYYLESSLYTDGSVAQIVGDLQSIGKTYESEGVLWLKTIDDGDDKDRVMRKSDGSFTYFVPDVAYHTSKWNRGFQKVINVQGSDHHGTIARVRSGLQGVAQKRGWDIPKTYPDYVLHKMVTVMRHGEEVKISKRAGSYVTVRDLVEWSGGVTPEMTSEERELALQRGRDAVRFFLISRKADTEFVFDIDLALQQNDENPVFYVQYAHARISSILQQWGGQTSDLASADLSLLQSKASDHLLRCLAEYPEMLTTAAEELAPHALAFYLRNLAGDFHTFYNADRVLVDDQNLKLARLALLSATRQVLQNGLKVLGVSAPAKM.

A 'HIGH' region motif is present at residues 136-146 (ANPTGPLHVGH).

The protein belongs to the class-I aminoacyl-tRNA synthetase family. In terms of assembly, monomer.

It is found in the cytoplasm. It carries out the reaction tRNA(Arg) + L-arginine + ATP = L-arginyl-tRNA(Arg) + AMP + diphosphate. In Polynucleobacter necessarius subsp. necessarius (strain STIR1), this protein is Arginine--tRNA ligase.